Here is a 404-residue protein sequence, read N- to C-terminus: Serpin-Z2B (404 aa).

The tract at residues Gly349 to Phe373 is RCL.

The protein belongs to the serpin family.

In terms of biological role, probable serine protease inhibitor. The sequence is that of Serpin-Z2B from Oryza sativa subsp. japonica (Rice).